We begin with the raw amino-acid sequence, 318 residues long: NADH-ubiquinone oxidoreductase chain 1 (318 aa).

The next 8 membrane-spanning stretches (helical) occupy residues F2–L22, M70–P90, L100–G120, L146–I166, H171–A191, L222–F242, E253–I273, and L294–I314.

This sequence belongs to the complex I subunit 1 family.

It is found in the mitochondrion inner membrane. The catalysed reaction is a ubiquinone + NADH + 5 H(+)(in) = a ubiquinol + NAD(+) + 4 H(+)(out). Functionally, core subunit of the mitochondrial membrane respiratory chain NADH dehydrogenase (Complex I) that is believed to belong to the minimal assembly required for catalysis. Complex I functions in the transfer of electrons from NADH to the respiratory chain. The immediate electron acceptor for the enzyme is believed to be ubiquinone. The sequence is that of NADH-ubiquinone oxidoreductase chain 1 (MT-ND1) from Rhinoceros unicornis (Greater Indian rhinoceros).